Here is a 304-residue protein sequence, read N- to C-terminus: Carbonic anhydrase 5A, mitochondrial (304 aa).

Residues 1–34 constitute a mitochondrion transit peptide; sequence MLRAKMLGRGPYKPLAILRHMGPLCATRPQHWRF. An Alpha-carbonic anhydrase domain is found at 35–295; it reads QHSYAEKHSN…LRGRNVRSSF (261 aa). Positions 129, 131, and 154 each coordinate Zn(2+).

The protein belongs to the alpha-carbonic anhydrase family. Zn(2+) is required as a cofactor. As to expression, high in liver, also detected in heart, lung, kidney, spleen and intestine.

It is found in the mitochondrion. The catalysed reaction is hydrogencarbonate + H(+) = CO2 + H2O. Its function is as follows. Mitochondrial carbonic anhydrase that catalyzes the reversible conversion of carbon dioxide to bicarbonate/HCO3. Mitochondria are impermeable to HCO3, and thus this intramitochondrial carbonic anhydrase is pivotal in providing HCO3 for multiple mitochondrial enzymes that catalyze the formation of essential metabolites of intermediary metabolism in the urea and Krebs cycles. The sequence is that of Carbonic anhydrase 5A, mitochondrial from Rattus norvegicus (Rat).